Consider the following 329-residue polypeptide: Holliday junction branch migration complex subunit RuvB (329 aa).

The large ATPase domain (RuvB-L) stretch occupies residues 1–181; the sequence is MNELLHQHKA…FGIPLHLEFY (181 aa). 9 residues coordinate ATP: leucine 20, arginine 21, glycine 62, lysine 65, threonine 66, threonine 67, arginine 171, tyrosine 181, and arginine 218. A Mg(2+)-binding site is contributed by threonine 66. The interval 182-252 is small ATPAse domain (RuvB-S); it reads SVEELMLVIK…FADSALFNLG (71 aa). Residues 255–329 form a head domain (RuvB-H) region; the sequence is KSGLDKMDIK…IEHLMNYKYI (75 aa). Arginine 308 and arginine 313 together coordinate DNA.

It belongs to the RuvB family. In terms of assembly, homohexamer. Forms an RuvA(8)-RuvB(12)-Holliday junction (HJ) complex. HJ DNA is sandwiched between 2 RuvA tetramers; dsDNA enters through RuvA and exits via RuvB. An RuvB hexamer assembles on each DNA strand where it exits the tetramer. Each RuvB hexamer is contacted by two RuvA subunits (via domain III) on 2 adjacent RuvB subunits; this complex drives branch migration. In the full resolvosome a probable DNA-RuvA(4)-RuvB(12)-RuvC(2) complex forms which resolves the HJ.

The protein resides in the cytoplasm. The catalysed reaction is ATP + H2O = ADP + phosphate + H(+). The RuvA-RuvB-RuvC complex processes Holliday junction (HJ) DNA during genetic recombination and DNA repair, while the RuvA-RuvB complex plays an important role in the rescue of blocked DNA replication forks via replication fork reversal (RFR). RuvA specifically binds to HJ cruciform DNA, conferring on it an open structure. The RuvB hexamer acts as an ATP-dependent pump, pulling dsDNA into and through the RuvAB complex. RuvB forms 2 homohexamers on either side of HJ DNA bound by 1 or 2 RuvA tetramers; 4 subunits per hexamer contact DNA at a time. Coordinated motions by a converter formed by DNA-disengaged RuvB subunits stimulates ATP hydrolysis and nucleotide exchange. Immobilization of the converter enables RuvB to convert the ATP-contained energy into a lever motion, pulling 2 nucleotides of DNA out of the RuvA tetramer per ATP hydrolyzed, thus driving DNA branch migration. The RuvB motors rotate together with the DNA substrate, which together with the progressing nucleotide cycle form the mechanistic basis for DNA recombination by continuous HJ branch migration. Branch migration allows RuvC to scan DNA until it finds its consensus sequence, where it cleaves and resolves cruciform DNA. The polypeptide is Holliday junction branch migration complex subunit RuvB (Anaplasma phagocytophilum (strain HZ)).